The following is a 473-amino-acid chain: Aspartyl/glutamyl-tRNA(Asn/Gln) amidotransferase subunit B (473 aa).

Belongs to the GatB/GatE family. GatB subfamily. In terms of assembly, heterotrimer of A, B and C subunits.

The enzyme catalyses L-glutamyl-tRNA(Gln) + L-glutamine + ATP + H2O = L-glutaminyl-tRNA(Gln) + L-glutamate + ADP + phosphate + H(+). The catalysed reaction is L-aspartyl-tRNA(Asn) + L-glutamine + ATP + H2O = L-asparaginyl-tRNA(Asn) + L-glutamate + ADP + phosphate + 2 H(+). Allows the formation of correctly charged Asn-tRNA(Asn) or Gln-tRNA(Gln) through the transamidation of misacylated Asp-tRNA(Asn) or Glu-tRNA(Gln) in organisms which lack either or both of asparaginyl-tRNA or glutaminyl-tRNA synthetases. The reaction takes place in the presence of glutamine and ATP through an activated phospho-Asp-tRNA(Asn) or phospho-Glu-tRNA(Gln). In Levilactobacillus brevis (strain ATCC 367 / BCRC 12310 / CIP 105137 / JCM 1170 / LMG 11437 / NCIMB 947 / NCTC 947) (Lactobacillus brevis), this protein is Aspartyl/glutamyl-tRNA(Asn/Gln) amidotransferase subunit B.